Reading from the N-terminus, the 312-residue chain is Malate dehydrogenase (312 aa).

Residues 12 to 17 (GSGFTG) and D36 contribute to the NAD(+) site. Positions 87 and 93 each coordinate substrate. Residues N100 and 123–125 (LTN) contribute to the NAD(+) site. A substrate-binding site is contributed by N125. Position 149 is a phosphoserine (S149). Residue R156 coordinates substrate. Catalysis depends on H180, which acts as the Proton acceptor.

It belongs to the LDH/MDH superfamily. MDH type 3 family.

The catalysed reaction is (S)-malate + NAD(+) = oxaloacetate + NADH + H(+). In terms of biological role, catalyzes the reversible oxidation of malate to oxaloacetate. This Oceanobacillus iheyensis (strain DSM 14371 / CIP 107618 / JCM 11309 / KCTC 3954 / HTE831) protein is Malate dehydrogenase.